A 237-amino-acid chain; its full sequence is UPF0758 protein Veis_1654 (237 aa).

Residues 115 to 237 (VFDTPDAVKH…ALSMAEMGLL (123 aa)) enclose the MPN domain. 3 residues coordinate Zn(2+): H186, H188, and D199. Residues 186–199 (HNHPSGSVQPSRAD) carry the JAMM motif motif.

It belongs to the UPF0758 family.

The sequence is that of UPF0758 protein Veis_1654 from Verminephrobacter eiseniae (strain EF01-2).